We begin with the raw amino-acid sequence, 325 residues long: Odorant receptor 131-2 (325 aa).

Residues 1–22 (MNSTSNSSLGNTFISKTLKEKS) lie on the Extracellular side of the membrane. 2 N-linked (GlcNAc...) asparagine glycosylation sites follow: asparagine 2 and asparagine 6. A helical membrane pass occupies residues 23 to 43 (LTVQVLVGILLYVNGLMIFTF). Over 44–54 (LKKETFRDTRY) the chain is Cytoplasmic. The helical transmembrane segment at 55–75 (ILFAQTLFVDSALMLFADLTL) threads the bilayer. The Extracellular portion of the chain corresponds to 76 to 91 (VGSAYELFIHIISCYI). A disulfide bridge connects residues cysteine 89 and cysteine 170. A helical membrane pass occupies residues 92 to 112 (FCTVMALLSICSPVTLVAMCL). Residues 113–135 (ERYVAICLPLRHASISSPKNTIN) lie on the Cytoplasmic side of the membrane. The chain crosses the membrane as a helical span at residues 136–156 (GLLIIWGVSSVIPLFIFIVSF). At 157–190 (TYTPPNAMNSYVVCSNDVMFQVKWLAEMRALSQQ) the chain is on the extracellular side. A helical transmembrane segment spans residues 191–211 (LLFVIMLCIVGSTYIKIMVAA). Residues 212–227 (KSASAENKKSTYKGLR) are Cytoplasmic-facing. A helical transmembrane segment spans residues 228-248 (TVILHGLQLILGMMQLITPYI). At 249–267 (DILTLKVDIMLFINVKFSN) the chain is on the extracellular side. The helical transmembrane segment at 268-285 (FMLFWIFPRCLSPLVYGL) threads the bilayer. At 286-325 (RDKKFYNALKYYAFCGIYVCKKHKIKDSKTIRGAVSIAIY) the chain is on the cytoplasmic side.

Belongs to the G-protein coupled receptor 1 family. Homodimer. Monomer.

The protein resides in the cell membrane. The protein localises to the cytoplasm. Probable olfactory receptor. The polypeptide is Odorant receptor 131-2 (Danio rerio (Zebrafish)).